A 379-amino-acid polypeptide reads, in one-letter code: Queuine tRNA-ribosyltransferase (379 aa).

The active-site Proton acceptor is Asp-94. Residues Asp-94–Phe-98, Asp-148, Gln-191, and Gly-218 each bind substrate. The RNA binding stretch occupies residues Gly-249 to Ser-255. Asp-268 serves as the catalytic Nucleophile. The RNA binding; important for wobble base 34 recognition stretch occupies residues Thr-273–Arg-277. Cys-306, Cys-308, Cys-311, and His-337 together coordinate Zn(2+).

Belongs to the queuine tRNA-ribosyltransferase family. Homodimer. Within each dimer, one monomer is responsible for RNA recognition and catalysis, while the other monomer binds to the replacement base PreQ1. Zn(2+) is required as a cofactor.

The catalysed reaction is 7-aminomethyl-7-carbaguanine + guanosine(34) in tRNA = 7-aminomethyl-7-carbaguanosine(34) in tRNA + guanine. Its pathway is tRNA modification; tRNA-queuosine biosynthesis. Functionally, catalyzes the base-exchange of a guanine (G) residue with the queuine precursor 7-aminomethyl-7-deazaguanine (PreQ1) at position 34 (anticodon wobble position) in tRNAs with GU(N) anticodons (tRNA-Asp, -Asn, -His and -Tyr). Catalysis occurs through a double-displacement mechanism. The nucleophile active site attacks the C1' of nucleotide 34 to detach the guanine base from the RNA, forming a covalent enzyme-RNA intermediate. The proton acceptor active site deprotonates the incoming PreQ1, allowing a nucleophilic attack on the C1' of the ribose to form the product. After dissociation, two additional enzymatic reactions on the tRNA convert PreQ1 to queuine (Q), resulting in the hypermodified nucleoside queuosine (7-(((4,5-cis-dihydroxy-2-cyclopenten-1-yl)amino)methyl)-7-deazaguanosine). The sequence is that of Queuine tRNA-ribosyltransferase from Bacillus mycoides (strain KBAB4) (Bacillus weihenstephanensis).